The following is a 514-amino-acid chain: Activin receptor type-2A (514 aa).

The N-terminal stretch at 1–20 (MGAATKLAFAVFLISCSSAG) is a signal peptide. Residues 21–136 (SILGRSETKE…TSNPVTTKPP (116 aa)) lie on the Extracellular side of the membrane. 5 disulfides stabilise this stretch: cysteine 31–cysteine 61, cysteine 51–cysteine 79, cysteine 86–cysteine 105, cysteine 92–cysteine 104, and cysteine 106–cysteine 111. N-linked (GlcNAc...) asparagine glycosylation is found at asparagine 46, asparagine 67, and asparagine 88. The helical transmembrane segment at 137-162 (LFNTLLYSLVPIMVVAVIVLFSFWMY) threads the bilayer. Topologically, residues 163–514 (RHHKLAYPPV…VDFPPKESSL (352 aa)) are cytoplasmic. In terms of domain architecture, Protein kinase spans 193–486 (LQLLEVKARG…EERIIQMQKL (294 aa)). ATP-binding positions include 199 to 207 (KARGRFGCV) and lysine 220. Residue aspartate 323 is the Proton acceptor of the active site.

The protein belongs to the protein kinase superfamily. TKL Ser/Thr protein kinase family. TGFB receptor subfamily.

It localises to the cell membrane. The catalysed reaction is L-threonyl-[receptor-protein] + ATP = O-phospho-L-threonyl-[receptor-protein] + ADP + H(+). It carries out the reaction L-seryl-[receptor-protein] + ATP = O-phospho-L-seryl-[receptor-protein] + ADP + H(+). Its function is as follows. Receptor for activin A, activin B and inhibin A. Involved in transmembrane signaling. This chain is Activin receptor type-2A (acvr2a), found in Xenopus laevis (African clawed frog).